The primary structure comprises 255 residues: Tryptophan synthase alpha chain (255 aa).

Residues E49 and D60 each act as proton acceptor in the active site.

It belongs to the TrpA family. As to quaternary structure, tetramer of two alpha and two beta chains.

It catalyses the reaction (1S,2R)-1-C-(indol-3-yl)glycerol 3-phosphate + L-serine = D-glyceraldehyde 3-phosphate + L-tryptophan + H2O. The protein operates within amino-acid biosynthesis; L-tryptophan biosynthesis; L-tryptophan from chorismate: step 5/5. Its function is as follows. The alpha subunit is responsible for the aldol cleavage of indoleglycerol phosphate to indole and glyceraldehyde 3-phosphate. This chain is Tryptophan synthase alpha chain, found in Desulfovibrio desulfuricans (strain ATCC 27774 / DSM 6949 / MB).